A 208-amino-acid polypeptide reads, in one-letter code: Component of Sp100-rs (208 aa).

Positions 6-121 (GSPRMSTEQE…LRRSFECGAK (116 aa)) constitute an HSR domain.

The sequence is that of Component of Sp100-rs (Csprs) from Mus musculus (Mouse).